The chain runs to 487 residues: MQSTKKAIEITESSLAAATTGYDAVDDLLHYHERGNGIQINGKDSFSNEQAGLFITRENQTWNGYKVFGQPVKLTFSFPDYKFSSTNVAGDTGLSKFSAEQQQQAKLSLQSWADVANITFTEVAAGQKANITFGNYSQDRPGHYDYGTQAYAFLPNTIWQGQDLGGQTWYNVNQSNVKHPATEDYGRQTFTHEIGHALGLSHPGDYNAGEGNPTYNDVTYAEDTRQFSLMSYWSETNTGGDNGGHYAAAPLLDDIAAIQHLYGANPSTRTGDTVYGFNSNTGRDFLSTTSNSQKVIFAAWDAGGNDTFDFSGYTANQRINLNEKSFSDVGGLKGNVSIAAGVTIENAIGGSGNDVIVGNAANNVLKGGAGNDVLFGGGGADELWGGAGKDIFVFSAASDSAPGASDWIRDFQKGIDKIDLSFFNKEANSSDFIHFVDHFSGTAGEALLSYNASSNVTDLSVNIGGHQAPDFLVKIVGQVDVATDFIV.

Positions 1 to 16 (MQSTKKAIEITESSLA) are excised as a propeptide. Histidine 192 contacts Zn(2+). Residue glutamate 193 is part of the active site. 3 residues coordinate Zn(2+): histidine 196, histidine 202, and tyrosine 232. The Ca(2+) site is built by arginine 269, glycine 271, threonine 273, aspartate 301, glycine 303, glycine 304, aspartate 306, threonine 343, glutamate 345, glycine 350, glycine 352, aspartate 354, asparagine 359, alanine 361, asparagine 363, glycine 367, glycine 368, alanine 369, glycine 370, aspartate 372, glycine 376, glycine 377, glycine 378, glycine 379, aspartate 381, glycine 385, glycine 386, alanine 387, glycine 388, aspartate 390, aspartate 399, aspartate 406, and aspartate 416. Hemolysin-type calcium-binding repeat units follow at residues 348–365 (IGGS…NNVL) and 366–383 (KGGA…ADEL).

It belongs to the peptidase M10B family. The cofactor is Ca(2+). It depends on Zn(2+) as a cofactor.

Its subcellular location is the secreted. The catalysed reaction is Preferential cleavage of bonds with hydrophobic residues in P1'.. Functionally, has insecticidal activity against the locust M.palpalis. When administered orally to locusts at a low dose it causes them to lie on their sides exhibiting sporadic limb movements and muscular twitching, followed by full recovery. When administered at higher doses the same symptoms are observed, followed by death. This chain is Serralysin, found in Serratia marcescens.